The chain runs to 520 residues: Maturase K (520 aa).

It belongs to the intron maturase 2 family. MatK subfamily.

Its subcellular location is the plastid. It localises to the chloroplast. In terms of biological role, usually encoded in the trnK tRNA gene intron. Probably assists in splicing its own and other chloroplast group II introns. This chain is Maturase K, found in Beaucarnea recurvata (Elephant-foot tree).